Reading from the N-terminus, the 140-residue chain is Probable glycine cleavage system H protein 3 (140 aa).

Residues 29-110 enclose the Lipoyl-binding domain; it reads VVSIGVTDLG…PYDSWIVKIR (82 aa). Residue K70 is modified to N6-lipoyllysine.

This sequence belongs to the GcvH family. The glycine cleavage system is composed of four proteins: P, T, L and H. (R)-lipoate serves as cofactor.

Its function is as follows. The glycine cleavage system catalyzes the degradation of glycine. The H protein shuttles the methylamine group of glycine from the P protein to the T protein. The polypeptide is Probable glycine cleavage system H protein 3 (Saccharolobus solfataricus (strain ATCC 35092 / DSM 1617 / JCM 11322 / P2) (Sulfolobus solfataricus)).